The following is a 509-amino-acid chain: Cytochrome P450 6A1 (509 aa).

Cys-449 serves as a coordination point for heme.

This sequence belongs to the cytochrome P450 family. Heme is required as a cofactor.

It is found in the endoplasmic reticulum membrane. The protein resides in the microsome membrane. It catalyses the reaction an organic molecule + reduced [NADPH--hemoprotein reductase] + O2 = an alcohol + oxidized [NADPH--hemoprotein reductase] + H2O + H(+). Its function is as follows. Involved in the metabolism of insect hormones and in the breakdown of synthetic insecticides. The chain is Cytochrome P450 6A1 (CYP6A1) from Musca domestica (House fly).